The chain runs to 477 residues: Delayed-rectifier potassium channel regulatory subunit KCNS2 (477 aa).

Topologically, residues 1 to 184 are cytoplasmic; sequence MTRQSLWDVS…LALDNPGYSV (184 aa). The chain crosses the membrane as a helical span at residues 185–206; that stretch reads LSRVFSVLSILVVLGSIITMCL. At 207–225 the chain is on the extracellular side; it reads NSLPDFQIPDSQGNPGEDP. A helical membrane pass occupies residues 226-248; it reads RFEIVEHFGIAWFTFELVARFAV. The Cytoplasmic segment spans residues 249–259; the sequence is APDFLKFFKNA. A helical transmembrane segment spans residues 260–280; that stretch reads LNLIDLMSIVPFYITLVVNLV. Residues 281-290 lie on the Extracellular side of the membrane; the sequence is VESSPTLANL. A helical; Voltage-sensor membrane pass occupies residues 291–311; the sequence is GRVAQVLRLMRIFRILKLARH. At 312–326 the chain is on the cytoplasmic side; the sequence is STGLRSLGATLKYSY. A helical membrane pass occupies residues 327–348; the sequence is KEVGLLLLYLSVGISIFSVVAY. Topologically, residues 349-361 are extracellular; it reads TIEKEENEGLATI. Positions 362–373 form an intramembrane region, helical; the sequence is PACWWWATVSMT. The Selectivity filter signature appears at 374–379; it reads TVGYGD. An intramembrane segment occupies 374–381; sequence TVGYGDVV. The Extracellular portion of the chain corresponds to 382-388; that stretch reads PGTTAGK. Residues 389–417 traverse the membrane as a helical segment; it reads LTASACILAGILVVVLPITLIFNKFSHFY. Residues 418–477 lie on the Cytoplasmic side of the membrane; it reads RRQKQLESAMRSCDFGDGMKEVPSVNLRDYYAHKVKSLMASLTNMSRSSPSELSLDDSLH.

Belongs to the potassium channel family. S (TC 1.A.1.2) subfamily. Kv9.2/KCNS2 sub-subfamily. As to quaternary structure, heterotetramer with KCNB1 and KCNB2. Does not form homomultimers. In terms of tissue distribution, detected in brain, but not in the other tissues tested. Expression was highest in the olfactory bulb, cerebral cortex, hippocampus, habenula, basolateral amygdaloid nuclei and cerebellum.

The protein resides in the cell membrane. Potassium channel regulatory subunit that modulate the delayed rectifier voltage-gated potassium channel activity of KCNB1 and KCNB2 by altering their kinetics, expression levels, and shifting the half-inactivation potential to more polarized values. While it does not form functional channels on its own, it can form functional heterotetrameric channels with KCNB1 and KCNB2. Each regulatory subunit has unique regulatory properties that can lead to extensive inhibition, significant changes in kinetics, and/or substantial shifts in the voltage dependencies of the inactivation process. In Mus musculus (Mouse), this protein is Delayed-rectifier potassium channel regulatory subunit KCNS2.